The chain runs to 381 residues: Neuropeptide Y receptor type 2 (381 aa).

The disordered stretch occupies residues 1–37 (MGPIGTEADENQTVEEIKVEPYGPGHTTPRGELAPDP). Residues 1-52 (MGPIGTEADENQTVEEIKVEPYGPGHTTPRGELAPDPEPELIDSTKLTEVRV) are Extracellular-facing. Asn11 carries N-linked (GlcNAc...) asparagine glycosylation. The chain crosses the membrane as a helical span at residues 53–73 (VLILAYCSIILLGVVGNSLVI). Topologically, residues 74 to 87 (HVVIKFKSMRTVTN) are cytoplasmic. A helical membrane pass occupies residues 88 to 108 (FFIANLAVADLLVNTLCLPFT). At 109–125 (LTYTLMGEWKMGPVLCH) the chain is on the extracellular side. A disulfide bridge links Cys124 with Cys204. The helical transmembrane segment at 126–146 (LVPYAQGLAVQVSTVTLTVIA) threads the bilayer. Residues 147–166 (LDRHRCIVYHLDSKISKQNS) are Cytoplasmic-facing. Residues 167 to 187 (FLIIGLAWGISALLASPLAIF) form a helical membrane-spanning segment. Residues 188-217 (REYSLIEIIPDFEIVACTEKWPGEEKSIYG) lie on the Extracellular side of the membrane. A helical membrane pass occupies residues 218–238 (TVYSLSSLLILYVLPLGIISV). At 239–269 (SYVRIWSKLKNHVSPGAANDHYHQRRQKTTK) the chain is on the cytoplasmic side. A helical transmembrane segment spans residues 270-290 (MLVFVVVVFAVSWLPLHAFQL). The Extracellular portion of the chain corresponds to 291 to 305 (AVDIDSQVLDLKEYK). The chain crosses the membrane as a helical span at residues 306–326 (LIFTVFHIIAMCSTFANPLLY). The Cytoplasmic segment spans residues 327–381 (GWMNSNYRKAFLSAFRCQQRLDAIQSEVCVTGKAKTNVEVEKNHGAADSAEATNV). Cys343 carries S-palmitoyl cysteine lipidation.

It belongs to the G-protein coupled receptor 1 family.

Its subcellular location is the cell membrane. Functionally, receptor for neuropeptide Y and peptide YY. The chain is Neuropeptide Y receptor type 2 (NPY2R) from Cavia porcellus (Guinea pig).